The sequence spans 257 residues: Urease accessory protein UreD (257 aa).

Belongs to the UreD family. UreD, UreF and UreG form a complex that acts as a GTP-hydrolysis-dependent molecular chaperone, activating the urease apoprotein by helping to assemble the nickel containing metallocenter of UreC. The UreE protein probably delivers the nickel.

The protein resides in the cytoplasm. Functionally, required for maturation of urease via the functional incorporation of the urease nickel metallocenter. This is Urease accessory protein UreD from Ruegeria pomeroyi (strain ATCC 700808 / DSM 15171 / DSS-3) (Silicibacter pomeroyi).